The chain runs to 529 residues: Bifunctional purine biosynthesis protein PurH (529 aa).

An MGS-like domain is found at 1-148 (MQQRRSVRRA…KNHKDVAIVV (148 aa)).

It belongs to the PurH family.

It catalyses the reaction (6R)-10-formyltetrahydrofolate + 5-amino-1-(5-phospho-beta-D-ribosyl)imidazole-4-carboxamide = 5-formamido-1-(5-phospho-D-ribosyl)imidazole-4-carboxamide + (6S)-5,6,7,8-tetrahydrofolate. The enzyme catalyses IMP + H2O = 5-formamido-1-(5-phospho-D-ribosyl)imidazole-4-carboxamide. It functions in the pathway purine metabolism; IMP biosynthesis via de novo pathway; 5-formamido-1-(5-phospho-D-ribosyl)imidazole-4-carboxamide from 5-amino-1-(5-phospho-D-ribosyl)imidazole-4-carboxamide (10-formyl THF route): step 1/1. Its pathway is purine metabolism; IMP biosynthesis via de novo pathway; IMP from 5-formamido-1-(5-phospho-D-ribosyl)imidazole-4-carboxamide: step 1/1. This Salmonella arizonae (strain ATCC BAA-731 / CDC346-86 / RSK2980) protein is Bifunctional purine biosynthesis protein PurH.